Here is a 442-residue protein sequence, read N- to C-terminus: Meiosis-specific with OB domain-containing protein (442 aa).

The segment at residues 167 to 272 (IINVLAAVKS…EANILLNFIR (106 aa)) is a DNA-binding region (OB).

The protein belongs to the MEIOB family. Component of a multiprotein complex with RPA2 and SPATA22. Interacts with SPATA22. Interacts with the complex BRME1:HSF2BP:BRCA2. In terms of tissue distribution, in fetal gonads, specifically expressed in the ovary starting at the 14th weeks post fertilization. In the adult, restricted to testis.

It is found in the cytoplasm. The protein resides in the nucleus. Its subcellular location is the chromosome. Its function is as follows. Single-stranded DNA-binding protein required for homologous recombination in meiosis I. Required for double strand breaks (DSBs) repair and crossover formation and promotion of faithful and complete synapsis. Not required for the initial loading of recombinases but required to maintain a proper number of RAD51 and DMC1 foci after the zygotene stage. May act by ensuring the stabilization of recombinases, which is required for successful homology search and meiotic recombination. Displays Single-stranded DNA 3'-5' exonuclease activity in vitro. The chain is Meiosis-specific with OB domain-containing protein from Homo sapiens (Human).